A 282-amino-acid polypeptide reads, in one-letter code: Putative phosphoenolpyruvate synthase regulatory protein (282 aa).

An ADP-binding site is contributed by 161 to 168 (GVSRSGKT).

This sequence belongs to the pyruvate, phosphate/water dikinase regulatory protein family. PSRP subfamily.

It carries out the reaction [pyruvate, water dikinase] + ADP = [pyruvate, water dikinase]-phosphate + AMP + H(+). The catalysed reaction is [pyruvate, water dikinase]-phosphate + phosphate + H(+) = [pyruvate, water dikinase] + diphosphate. Its function is as follows. Bifunctional serine/threonine kinase and phosphorylase involved in the regulation of the phosphoenolpyruvate synthase (PEPS) by catalyzing its phosphorylation/dephosphorylation. This is Putative phosphoenolpyruvate synthase regulatory protein from Janthinobacterium sp. (strain Marseille) (Minibacterium massiliensis).